A 555-amino-acid chain; its full sequence is Tetracycline 7-halogenase (555 aa).

22 to 27 (GSGLSG) contacts FAD.

The protein belongs to the flavin-dependent halogenase family. Bacterial tryptophan halogenase subfamily. As to quaternary structure, homodimer.

The enzyme catalyses tetracycline + FADH2 + chloride + O2 = 7-chlorotetracycline + FAD + 2 H2O + H(+). Its pathway is antibiotic biosynthesis. Functionally, involved in the biosynthesis of chlorotetracycline (CTC), an important member from antibiotics tetracycline (TC) family, which inhibits protein synthesis in bacteria and is widely involved in clinical therapy, animal feeds and aquaculture. Utilizes FADH(2) supplied by the flavin reductase CtcQ, to catalyze the chlorination of tetracycline (TC) at C7 position, leading to the production of 7-chlorotetracycline. The enzyme forms a lysine chloramine intermediate on an internal lysine residue before transferring the chlorine to the substrate. It is stereo-selective for the 4S (natural) isomer of tetracycline. The sequence is that of Tetracycline 7-halogenase from Kitasatospora aureofaciens (Streptomyces aureofaciens).